The following is a 37-amino-acid chain: Kappa-actitoxin-Bcs3b (37 aa).

Residues 2–37 (CKDGFPTATCQHAKLVGNCKNSQKYRANCAKTCGPC) form the ShKT domain. 3 disulfides stabilise this stretch: Cys2–Cys37, Cys11–Cys30, and Cys20–Cys34. Positions 25–26 (KY) are crucial for binding to potassium channels.

It belongs to the sea anemone type 1 potassium channel toxin family. Type 1b subfamily.

The protein resides in the secreted. The protein localises to the nematocyst. Its function is as follows. Inhibits voltage-gated potassium channels (IC(50)=14.42 nM for rKCNA1/Kv1.1, IC(50)=80.4 nM for rKCNA2/Kv1.2, IC(50)=7.76 nM for rKCNA6/Kv1.6, IC(50)=13.12 nM for hKCNA3/Kv1.3, and IC(50)=49.14 nM for insect Shaker IR). Binds the Shaker IR channels in a voltage-independent manner. This Bunodosoma caissarum (Sea anemone) protein is Kappa-actitoxin-Bcs3b.